Reading from the N-terminus, the 208-residue chain is MSCPEQIVQLMHMHLDGDILPKDEHVLNEHLETCEKCRKHFYEMEKSIALVRSTSHVEAPADFTANVMAKLPKEKKRASVKRWFRTHPVIAAAAVFIILMGGGFFNSWHNDHNFSVSKQPNLVVHNHTVTVPEGETVKGDVTVKNGKLIIKGKIDGDVTVVNGEKYMASAGQVTGQIEEINQLFDWTWYKMKSAGKSVLDAFNPNGEE.

Residues 1-87 are Cytoplasmic-facing; the sequence is MSCPEQIVQL…ASVKRWFRTH (87 aa). Residues Cys-3, His-30, Cys-34, and Cys-37 each coordinate Zn(2+). A helical transmembrane segment spans residues 88 to 108; it reads PVIAAAAVFIILMGGGFFNSW. At 109–208 the chain is on the extracellular side; it reads HNDHNFSVSK…LDAFNPNGEE (100 aa).

It belongs to the zinc-associated anti-sigma factor (ZAS) superfamily. Anti-sigma-W factor family. As to quaternary structure, forms a heterodimer with cognate sigma factor SigW, which probably prevents SigW from binding to DNA. The cofactor is Zn(2+). Post-translationally, is processed by successive proteolytic events. First, the extracellular region of RsiW is cleaved by PrsW (site-1 cleavage) in response to cell envelope stresses. In a reconstituted E.coli system PrsW cuts between Ala-168 and Ser-169 followed by trimming by E.coli Tsp; the endogenous extracellular exopeptidase responsible for the event in B.subtilis has not been identified. Next, it undergoes cleavage at an intramembrane site (site-2 cleavage) mediated by RasP. This cleavage uncovers a cryptic proteolytic tag with conserved alanine residues in the transmembrane segment, that is recognized mainly by the ClpXP protease, which completely degrades the protein in the cytoplasm and leads to the induction of the sigma-W-controlled genes.

Its subcellular location is the cell membrane. Its function is as follows. The anti-sigma factor for extracytoplasmic function (ECF) sigma factor sigma-W (SigW). Holds SigW, its cognate ECF sigma factor, in an inactive form until released by regulated intramembrane proteolysis (RIP). SigW and RsiW mediate cell response to cell wall stress. RIP occurs when an extracytoplasmic signal triggers a concerted proteolytic cascade to transmit information and elicit cellular responses. The membrane-spanning regulatory substrate protein is first cut periplasmically (site-1 protease, S1P, PrsW), then within the membrane itself (site-2 protease, S2P, RasP), while cytoplasmic proteases finish degrading the anti-sigma factor, liberating sigma-W. The chain is Anti-sigma-W factor RsiW (rsiW) from Bacillus subtilis (strain 168).